Consider the following 249-residue polypeptide: Triosephosphate isomerase (249 aa).

The substrate site is built by N12 and K14. N6-acetyllysine is present on K14. The residue at position 68 (Y68) is a 3'-nitrotyrosine. S80 is subject to Phosphoserine. The active-site Electrophile is H96. S106 is modified (phosphoserine). Residue K142 forms a Glycyl lysine isopeptide (Lys-Gly) (interchain with G-Cter in SUMO1) linkage. Residue K149 is modified to N6-succinyllysine. At K156 the chain carries N6-acetyllysine; alternate. K156 bears the N6-succinyllysine; alternate mark. S159 carries the post-translational modification Phosphoserine. Catalysis depends on E166, which acts as the Proton acceptor. T173 carries the phosphothreonine modification. At K194 the chain carries N6-acetyllysine; alternate. The residue at position 194 (K194) is an N6-succinyllysine; alternate. The residue at position 194 (K194) is an N6-methyllysine; alternate. S198 carries the phosphoserine modification. At Y209 the chain carries 3'-nitrotyrosine. Residue S212 is modified to Phosphoserine. T214 is subject to Phosphothreonine. S223 carries the post-translational modification Phosphoserine. K238 is subject to N6-acetyllysine.

This sequence belongs to the triosephosphate isomerase family. Homodimer.

It is found in the cytoplasm. The enzyme catalyses dihydroxyacetone phosphate = methylglyoxal + phosphate. It catalyses the reaction D-glyceraldehyde 3-phosphate = dihydroxyacetone phosphate. The protein operates within carbohydrate degradation; glycolysis; D-glyceraldehyde 3-phosphate from glycerone phosphate: step 1/1. It participates in carbohydrate biosynthesis; gluconeogenesis. Triosephosphate isomerase is an extremely efficient metabolic enzyme that catalyzes the interconversion between dihydroxyacetone phosphate (DHAP) and D-glyceraldehyde-3-phosphate (G3P) in glycolysis and gluconeogenesis. In terms of biological role, it is also responsible for the non-negligible production of methylglyoxal a reactive cytotoxic side-product that modifies and can alter proteins, DNA and lipids. This Macaca fascicularis (Crab-eating macaque) protein is Triosephosphate isomerase (TPI1).